The primary structure comprises 153 residues: Endoribonuclease YbeY (153 aa).

Residues histidine 113, histidine 117, and histidine 123 each coordinate Zn(2+).

It belongs to the endoribonuclease YbeY family. Requires Zn(2+) as cofactor.

It localises to the cytoplasm. Single strand-specific metallo-endoribonuclease involved in late-stage 70S ribosome quality control and in maturation of the 3' terminus of the 16S rRNA. The protein is Endoribonuclease YbeY of Aliivibrio salmonicida (strain LFI1238) (Vibrio salmonicida (strain LFI1238)).